Consider the following 393-residue polypeptide: MAEKVSFEEGKLQVPDKPVIPYIEGDGVGQDIWKNAQIVFDKAIAKVYGGHKQVIWREVLAGKKAYNETGNWLPNETLEIIKTHLLAIKGPLETPVGGGIRSLNVALRQELDLFACVRPVRYFKGVPSPLKHPEKTAITIFRENTEDIYAGIEWNAGTAEVQKVINFLQDDMQVKKIRFPKSSSIGIKPISIEGSQRLIRAAIEYALANNLTKVTLVHKGNIQKFTEGGFRKWGYELAKREYAAELASGQLVVDDIIADNFLQQILLKPERFDVVALTNLNGDYASDALAAQVGGIGISPGANINYQTGHAIFEATHGTAPDIAGQDLANPSSVLLSGCMLFDYIGWSKVSDLIMKAVEKAIANGQVTIDFAKELGVEALTTRQFSEVLLTYL.

Residues serine 102, asparagine 104, arginine 108, arginine 118, and arginine 142 each contribute to the D-threo-isocitrate site. Aspartate 283 is a binding site for Mg(2+).

The protein belongs to the isocitrate and isopropylmalate dehydrogenases family. Homodimer. It depends on Mg(2+) as a cofactor. Requires Mn(2+) as cofactor.

The enzyme catalyses D-threo-isocitrate + NADP(+) = 2-oxoglutarate + CO2 + NADPH. Its function is as follows. Catalyzes the oxidative decarboxylation of isocitrate to 2-oxoglutarate and carbon dioxide with the concomitant reduction of NADP(+). This is Isocitrate dehydrogenase [NADP] (icd) from Streptococcus mutans serotype c (strain ATCC 700610 / UA159).